Reading from the N-terminus, the 270-residue chain is Shikimate dehydrogenase (NADP(+)) (270 aa).

Shikimate-binding positions include 15–17 and threonine 62; that span reads SKS. The active-site Proton acceptor is the lysine 66. Aspartate 78 contacts NADP(+). Positions 87 and 103 each coordinate shikimate. Residues 128-132, 152-157, and leucine 213 contribute to the NADP(+) site; these read GAGGA and NRTVDR. Tyrosine 215 is a binding site for shikimate. Glycine 237 contributes to the NADP(+) binding site.

The protein belongs to the shikimate dehydrogenase family. In terms of assembly, homodimer.

The enzyme catalyses shikimate + NADP(+) = 3-dehydroshikimate + NADPH + H(+). It functions in the pathway metabolic intermediate biosynthesis; chorismate biosynthesis; chorismate from D-erythrose 4-phosphate and phosphoenolpyruvate: step 4/7. In terms of biological role, involved in the biosynthesis of the chorismate, which leads to the biosynthesis of aromatic amino acids. Catalyzes the reversible NADPH linked reduction of 3-dehydroshikimate (DHSA) to yield shikimate (SA). This is Shikimate dehydrogenase (NADP(+)) from Halorhodospira halophila (strain DSM 244 / SL1) (Ectothiorhodospira halophila (strain DSM 244 / SL1)).